The following is a 488-amino-acid chain: Malonate-semialdehyde dehydrogenase (488 aa).

NAD(+)-binding residues include alanine 150, phenylalanine 152, lysine 176, glutamate 179, arginine 180, serine 229, and threonine 251. Cysteine 284 functions as the Nucleophile in the catalytic mechanism. Residue glutamate 382 participates in NAD(+) binding.

The protein belongs to the aldehyde dehydrogenase family. IolA subfamily. As to quaternary structure, homotetramer.

The enzyme catalyses 3-oxopropanoate + NAD(+) + CoA + H2O = hydrogencarbonate + acetyl-CoA + NADH + H(+). The catalysed reaction is 2-methyl-3-oxopropanoate + NAD(+) + CoA + H2O = propanoyl-CoA + hydrogencarbonate + NADH + H(+). It functions in the pathway polyol metabolism; myo-inositol degradation into acetyl-CoA; acetyl-CoA from myo-inositol: step 7/7. Functionally, catalyzes the oxidation of malonate semialdehyde (MSA) and methylmalonate semialdehyde (MMSA) into acetyl-CoA and propanoyl-CoA, respectively. Is involved in a myo-inositol catabolic pathway. Bicarbonate, and not CO2, is the end-product of the enzymatic reaction. The polypeptide is Malonate-semialdehyde dehydrogenase (Listeria monocytogenes serotype 4b (strain F2365)).